Reading from the N-terminus, the 336-residue chain is Protein-glutamate methylesterase/protein-glutamine glutaminase 1 (336 aa).

Residues 2 to 119 (KIAIVNDMPM…GNAQEAAAPL (118 aa)) enclose the Response regulatory domain. Asp53 is subject to 4-aspartylphosphate. In terms of domain architecture, CheB-type methylesterase spans 143 to 336 (PLRSGAPRQS…APRLLEIFAK (194 aa)). Active-site residues include Ser159, His186, and Asp279.

It belongs to the CheB family. Phosphorylated by CheA. Phosphorylation of the N-terminal regulatory domain activates the methylesterase activity.

It is found in the cytoplasm. The catalysed reaction is [protein]-L-glutamate 5-O-methyl ester + H2O = L-glutamyl-[protein] + methanol + H(+). It catalyses the reaction L-glutaminyl-[protein] + H2O = L-glutamyl-[protein] + NH4(+). In terms of biological role, involved in chemotaxis. Part of a chemotaxis signal transduction system that modulates chemotaxis in response to various stimuli. Catalyzes the demethylation of specific methylglutamate residues introduced into the chemoreceptors (methyl-accepting chemotaxis proteins or MCP) by CheR. Also mediates the irreversible deamidation of specific glutamine residues to glutamic acid. The polypeptide is Protein-glutamate methylesterase/protein-glutamine glutaminase 1 (Pseudomonas fluorescens (strain ATCC BAA-477 / NRRL B-23932 / Pf-5)).